We begin with the raw amino-acid sequence, 568 residues long: MRQTMTFIPTLKEVPADAEVKSHQLLLRAGFIRQTASGIYSYLPLATLMLRKIETIIREELEAIGAAELLMPALQPAELWQESGRWNDYGPELMRLKDRASRDFALGPTHEEVITALLRDEVKSYKRLPLTLYQIQTKFRDEKRPRFGLLRGREFIMKDAYSFHATSESLDEVYNLMHQAYSNIFTRCGLEFRSVIADSGSIGGNESKEFMALSDIGEDTIAYSDASDYAANTEMAPVLYMEKKSHELEKELEKVATPDQKSIADIVEFLEVPIEKTMKSMLYQVDEEVIMVLVRGDHEVNDIKIKNALDATNVELVDPAVAVELLGANFGSLGPINVPENTRVFADNAVKDIVNAVVGANEDGFHYINVNADRDFTVTSYFDLRMIQVGDLSPDGQGVIKFAEGIEVGHIFKLGTKYSQAMNATILDENGRAQPIIMGCYGIGVSRILSAIAEQSNDENGFVWDKQISPFDLHLIPVNMKSEEQVAFAETLYTSLQGAGFSVLIDDRAERAGVKFADADLIGLPIRITVGKKAAEGVVEVKIRKTGEMIEVRQDELLNTLPILFGDK.

Belongs to the class-II aminoacyl-tRNA synthetase family. ProS type 1 subfamily. In terms of assembly, homodimer.

It is found in the cytoplasm. The catalysed reaction is tRNA(Pro) + L-proline + ATP = L-prolyl-tRNA(Pro) + AMP + diphosphate. In terms of biological role, catalyzes the attachment of proline to tRNA(Pro) in a two-step reaction: proline is first activated by ATP to form Pro-AMP and then transferred to the acceptor end of tRNA(Pro). As ProRS can inadvertently accommodate and process non-cognate amino acids such as alanine and cysteine, to avoid such errors it has two additional distinct editing activities against alanine. One activity is designated as 'pretransfer' editing and involves the tRNA(Pro)-independent hydrolysis of activated Ala-AMP. The other activity is designated 'posttransfer' editing and involves deacylation of mischarged Ala-tRNA(Pro). The misacylated Cys-tRNA(Pro) is not edited by ProRS. The chain is Proline--tRNA ligase from Listeria monocytogenes serotype 4a (strain HCC23).